A 500-amino-acid polypeptide reads, in one-letter code: Lysine--tRNA ligase (500 aa).

Mg(2+) contacts are provided by Glu-410 and Glu-417.

Belongs to the class-II aminoacyl-tRNA synthetase family. As to quaternary structure, homodimer. Mg(2+) serves as cofactor.

The protein resides in the cytoplasm. The enzyme catalyses tRNA(Lys) + L-lysine + ATP = L-lysyl-tRNA(Lys) + AMP + diphosphate. In Shewanella amazonensis (strain ATCC BAA-1098 / SB2B), this protein is Lysine--tRNA ligase.